Reading from the N-terminus, the 518-residue chain is Probable protein phosphatase 2C 14 (518 aa).

Low complexity-rich tracts occupy residues 1 to 10 (MVEAAAGRRS) and 86 to 105 (PQRQ…APGA). Disordered stretches follow at residues 1–31 (MVEA…QQHQ) and 86–108 (PQRQ…ADGR). The region spanning 129–437 (VASLYTLQGK…DDCAVVCLFL (309 aa)) is the PPM-type phosphatase domain. Aspartate 165 and glycine 166 together coordinate Mn(2+). The tract at residues 192-222 (TDEGRQTSTSSIKSNGDETGSPGNMGRDAEQ) is disordered. The span at 197–213 (QTSTSSIKSNGDETGSP) shows a compositional bias: polar residues. 2 residues coordinate Mn(2+): aspartate 382 and aspartate 428.

This sequence belongs to the PP2C family. Mg(2+) serves as cofactor. Requires Mn(2+) as cofactor.

The enzyme catalyses O-phospho-L-seryl-[protein] + H2O = L-seryl-[protein] + phosphate. It catalyses the reaction O-phospho-L-threonyl-[protein] + H2O = L-threonyl-[protein] + phosphate. In Oryza sativa subsp. japonica (Rice), this protein is Probable protein phosphatase 2C 14.